The chain runs to 233 residues: Large ribosomal subunit protein uL1 (233 aa).

Belongs to the universal ribosomal protein uL1 family. In terms of assembly, part of the 50S ribosomal subunit.

Functionally, binds directly to 23S rRNA. The L1 stalk is quite mobile in the ribosome, and is involved in E site tRNA release. In terms of biological role, protein L1 is also a translational repressor protein, it controls the translation of the L11 operon by binding to its mRNA. In Shewanella baltica (strain OS185), this protein is Large ribosomal subunit protein uL1.